A 351-amino-acid chain; its full sequence is Modulator of apoptosis 1 (351 aa).

The LIR motif lies at 49–52 (YRLL). Residues 120–127 (LTRALAHE) are BH3-like. Positions 202–205 (KRRR) are RASSF1-binding.

The protein belongs to the PNMA family. In terms of assembly, homodimer. Under normal circumstances, held in an inactive conformation by an intramolecular interaction. Interacts with BAX. Binding to RASSF1 isoform A (RASSF1A) relieves this inhibitory interaction and allows further binding to BAX. Also binds to BCL2 and BCLX. Recruited to the TNFRSF1A and TNFRSF10A complexes in response to their respective cognate ligand, after internalization. Interacts with TRIM39. Interacts with RASSF6. Interacts with ATG8 proteins MAP1LC3A, MAP1LC3B and MAP1LC3C. Does not interact with ATG8 proteins GABARAPL1, GABARAPL2 and GABARAP. Interacts with SQSTM1; promoting dissociation of SQSTM1 inclusion bodies that sequester KEAP1. Ubiquitinated and degraded during mitotic exit by APC/C-Cdh1, this modification is inhibited by TRIM39.

The protein resides in the cytoplasm. It localises to the cytosol. Its subcellular location is the mitochondrion outer membrane. The protein localises to the extracellular vesicle membrane. In terms of biological role, retrotransposon-derived protein that forms virion-like capsids. Acts as an effector of BAX during apoptosis: enriched at outer mitochondria membrane and associates with BAX upon induction of apoptosis, facilitating BAX-dependent mitochondrial outer membrane permeabilization and apoptosis. Required for death receptor-dependent apoptosis. When associated with RASSF1, promotes BAX conformational change and translocation to mitochondrial membranes in response to TNF and TNFSF10 stimulation. Also promotes autophagy: promotes phagophore closure via association with ATG8 proteins. Acts as an inhibitor of the NFE2L2/NRF2 pathway via interaction with SQSTM1: interaction promotes dissociation of SQSTM1 inclusion bodies that sequester KEAP1, relieving inactivation of the BCR(KEAP1) complex. The protein is Modulator of apoptosis 1 of Macaca fascicularis (Crab-eating macaque).